The following is a 427-amino-acid chain: Serine--tRNA ligase (427 aa).

Residue 231–233 (TAE) participates in L-serine binding. ATP contacts are provided by residues 262–264 (RRE) and V278. E285 is a binding site for L-serine. ATP is bound at residue 349–352 (EVSS). Residue S384 coordinates L-serine.

It belongs to the class-II aminoacyl-tRNA synthetase family. Type-1 seryl-tRNA synthetase subfamily. In terms of assembly, homodimer. The tRNA molecule binds across the dimer.

The protein resides in the cytoplasm. The enzyme catalyses tRNA(Ser) + L-serine + ATP = L-seryl-tRNA(Ser) + AMP + diphosphate + H(+). The catalysed reaction is tRNA(Sec) + L-serine + ATP = L-seryl-tRNA(Sec) + AMP + diphosphate + H(+). Its pathway is aminoacyl-tRNA biosynthesis; selenocysteinyl-tRNA(Sec) biosynthesis; L-seryl-tRNA(Sec) from L-serine and tRNA(Sec): step 1/1. Functionally, catalyzes the attachment of serine to tRNA(Ser). Is also able to aminoacylate tRNA(Sec) with serine, to form the misacylated tRNA L-seryl-tRNA(Sec), which will be further converted into selenocysteinyl-tRNA(Sec). The protein is Serine--tRNA ligase of Chlamydia pneumoniae (Chlamydophila pneumoniae).